Here is a 114-residue protein sequence, read N- to C-terminus: Ghrelin (114 aa).

The N-terminal stretch at 1 to 24 (MNFGKAAIFGVVLFCLLWTEGAQA) is a signal peptide. Thr27 carries O-decanoyl threonine; alternate lipidation. Thr27 is lipidated: O-octanoyl threonine; alternate. A propeptide spans 55–114 (GVEDDLAGEEIGVTFPLDMKMTQEQFQKQRAAVQDFLYSSLLSLGSVQDTEDKNENPQSQ) (removed in mature form).

This sequence belongs to the motilin family. Post-translationally, O-octanoylated by GOAT/MBOAT4. O-octanoylation or O-decanoylation is essential for activity. The O-decanoylated form ghrelin-27-C10 differs in the length of the carbon backbone of the carboxylic acid bound to Thr-27. 33% of frog ghrelin is O-decanoylated. In terms of processing, 80% of frog ghrelin has Asn-52 cleaved from its C-terminus giving rise to ghrelin-27. As to expression, high levels in stomach. Moderate levels in small intestine, pancreas and testis. Low levels in heart, lung and gall bladder.

The protein localises to the secreted. Its function is as follows. Ligand for growth hormone secretagogue receptor type 1 (GHSR). Induces the release of growth hormone from the pituitary. Has an appetite-stimulating effect, induces adiposity and stimulates gastric acid secretion. Involved in growth regulation. This chain is Ghrelin (GHRL), found in Aquarana catesbeiana (American bullfrog).